A 232-amino-acid polypeptide reads, in one-letter code: Enolase-phosphatase E1 (232 aa).

The protein belongs to the HAD-like hydrolase superfamily. MasA/MtnC family. As to quaternary structure, monomer. It depends on Mg(2+) as a cofactor.

It catalyses the reaction 5-methylsulfanyl-2,3-dioxopentyl phosphate + H2O = 1,2-dihydroxy-5-(methylsulfanyl)pent-1-en-3-one + phosphate. It functions in the pathway amino-acid biosynthesis; L-methionine biosynthesis via salvage pathway; L-methionine from S-methyl-5-thio-alpha-D-ribose 1-phosphate: step 3/6. Its pathway is amino-acid biosynthesis; L-methionine biosynthesis via salvage pathway; L-methionine from S-methyl-5-thio-alpha-D-ribose 1-phosphate: step 4/6. Bifunctional enzyme that catalyzes the enolization of 2,3-diketo-5-methylthiopentyl-1-phosphate (DK-MTP-1-P) into the intermediate 2-hydroxy-3-keto-5-methylthiopentenyl-1-phosphate (HK-MTPenyl-1-P), which is then dephosphorylated to form the acireductone 1,2-dihydroxy-3-keto-5-methylthiopentene (DHK-MTPene). The polypeptide is Enolase-phosphatase E1 (Xylella fastidiosa (strain 9a5c)).